A 396-amino-acid polypeptide reads, in one-letter code: 1-deoxy-D-xylulose 5-phosphate reductoisomerase (396 aa).

Thr14, Gly15, Ser16, Ile17, Gly40, and Asn128 together coordinate NADPH. A 1-deoxy-D-xylulose 5-phosphate-binding site is contributed by Lys129. Glu130 serves as a coordination point for NADPH. Residue Asp154 coordinates Mn(2+). Positions 155, 156, 180, and 203 each coordinate 1-deoxy-D-xylulose 5-phosphate. Mn(2+) is bound at residue Glu156. Gly209 is a binding site for NADPH. Residues Ser216, Asn221, Lys222, and Glu225 each contribute to the 1-deoxy-D-xylulose 5-phosphate site. Glu225 contacts Mn(2+).

The protein belongs to the DXR family. Mg(2+) is required as a cofactor. It depends on Mn(2+) as a cofactor.

It carries out the reaction 2-C-methyl-D-erythritol 4-phosphate + NADP(+) = 1-deoxy-D-xylulose 5-phosphate + NADPH + H(+). It participates in isoprenoid biosynthesis; isopentenyl diphosphate biosynthesis via DXP pathway; isopentenyl diphosphate from 1-deoxy-D-xylulose 5-phosphate: step 1/6. Its function is as follows. Catalyzes the NADPH-dependent rearrangement and reduction of 1-deoxy-D-xylulose-5-phosphate (DXP) to 2-C-methyl-D-erythritol 4-phosphate (MEP). This is 1-deoxy-D-xylulose 5-phosphate reductoisomerase from Xylella fastidiosa (strain 9a5c).